The sequence spans 777 residues: DISP complex protein LRCH3 (777 aa).

LRR repeat units follow at residues 56–79 (AAVT…AANH), 81–104 (LTDT…ACHF), 105–127 (VSLE…ILNL), 128–150 (QALT…LCNL), 152–172 (LKVL…IGHL), 173–195 (RHLM…IGNL), 196–218 (EALR…LAEL), 220–239 (LIRL…CYRN), 240–264 (LRHL…CIKG), and 266–290 (VHIF…DRRP). A mediates interaction with DOCK7 region spans residues 56–290 (AAVTGVLSLS…PDLPDYDRRP (235 aa)). Phosphoserine occurs at positions 324, 415, and 419. Residues 382–648 (TAEEEEAEVR…DSTDSITGQN (267 aa)) form a mediates direct interaction with MYO6 region. The segment at 568–590 (FTPLKSDDRPNALLSSPATETVH) is disordered. Phosphoserine occurs at positions 611 and 628. Residues 621–653 (ETNKGHASPLPPSAAPTTDSTDSITGQNSRQRE) are disordered. Low complexity predominate over residues 635-645 (APTTDSTDSIT). One can recognise a Calponin-homology (CH) domain in the interval 652–765 (REEELELIDQ…VTVQALLELA (114 aa)).

Component of the DOCK7-induced septin displacement/DISP complex, at least composed of DOCK7, LRCH3 and MYO6.

It is found in the cytoplasm. Its function is as follows. As part of the DISP complex, may regulate the association of septins with actin and thereby regulate the actin cytoskeleton. In Homo sapiens (Human), this protein is DISP complex protein LRCH3.